A 140-amino-acid chain; its full sequence is Large-conductance mechanosensitive channel (140 aa).

Helical transmembrane passes span 7 to 27 (EFAFKGNVLDLAVAVVMGAAF), 30 to 50 (IITSLVTYIIMPLIGLIFGTV), and 64 to 84 (GLFVQSVIDFLIVAFALFLFV).

It belongs to the MscL family. In terms of assembly, homopentamer.

It is found in the cell membrane. Channel that opens in response to stretch forces in the membrane lipid bilayer. May participate in the regulation of osmotic pressure changes within the cell. The polypeptide is Large-conductance mechanosensitive channel (Staphylococcus carnosus (strain TM300)).